A 633-amino-acid chain; its full sequence is Dynein axonemal assembly factor 1 (633 aa).

Residues 1 to 80 (MHPEASEPPV…SRDDRDDRGP (80 aa)) are disordered. Basic and acidic residues predominate over residues 22–42 (AGDHGDAGPGVRKEEINETKE). Over residues 46–60 (GPCTTSCQSQQQPSG) the composition is skewed to low complexity. Over residues 70-80 (HSRDDRDDRGP) the composition is skewed to basic and acidic residues. LRR repeat units follow at residues 101-123 (ALND…EEYT), 124-145 (GLRC…QAQS), 146-167 (ELRC…EPLQ), 168-189 (KLDA…SCLP), 190-211 (VLNT…EHLR), and 215-236 (QLCV…SVLE). Residues 249-288 (NPVTKHIPNYRRTVTVRLKHLTYLDDRPVFPKDRACAEAW) enclose the LRRCT domain. A compositionally biased stretch (basic and acidic residues) spans 326 to 344 (EERKKARDRGETPLPESEK). Disordered stretches follow at residues 326–364 (EERK…TQQK) and 404–436 (LSGN…RTED). Residue serine 349 is modified to Phosphoserine. The segment covering 352-364 (AQEKPPKGETQQK) has biased composition (basic and acidic residues). Residues 413-427 (TPVVVTPEEVTSPVE) show a composition bias toward low complexity. Threonine 462 carries the post-translational modification Phosphothreonine. Serine 465 and serine 488 each carry phosphoserine. Polar residues-rich tracts occupy residues 538-555 (TTDL…SSHP) and 568-592 (GESN…SEGG). Residues 538–633 (TTDLETQSQD…GLEDIEFGLD (96 aa)) form a disordered region.

The protein belongs to the DNAAF1 family.

The protein resides in the cell projection. It is found in the cilium. Cilium-specific protein required for the stability of the ciliary architecture. Plays a role in cytoplasmic preassembly of dynein arms. Involved in regulation of microtubule-based cilia and actin-based brush border microvilli. The polypeptide is Dynein axonemal assembly factor 1 (Dnaaf1) (Rattus norvegicus (Rat)).